The chain runs to 289 residues: Type II methyltransferase M.MjaIII (289 aa).

4 residues coordinate S-adenosyl-L-methionine: tryptophan 9, lysine 13, aspartate 63, and aspartate 199.

Belongs to the N(4)/N(6)-methyltransferase family.

It catalyses the reaction a 2'-deoxyadenosine in DNA + S-adenosyl-L-methionine = an N(6)-methyl-2'-deoxyadenosine in DNA + S-adenosyl-L-homocysteine + H(+). Its function is as follows. An alpha subtype methylase that recognizes the double-stranded sequence 5'-GATC-3', methylates A-2 on both strands, and protects the DNA from cleavage by the MjaIII endonuclease. In Methanocaldococcus jannaschii (strain ATCC 43067 / DSM 2661 / JAL-1 / JCM 10045 / NBRC 100440) (Methanococcus jannaschii), this protein is Type II methyltransferase M.MjaIII (mjaIIIM).